The chain runs to 68 residues: Protein transport protein Sec61 gamma-2 subunit (68 aa).

Residues 1 to 32 lie on the Cytoplasmic side of the membrane; that stretch reads MDKVVKFAEPGRAFAKDSIRLVKRCTKPDRKE. Residues 33-61 traverse the membrane as a helical segment; it reads FQKIAIATAVGFCIMGFIGFFVKLIHIPI. The Extracellular segment spans residues 62-68; it reads NNIIVGS.

It belongs to the SecE/SEC61-gamma family. In terms of assembly, heterotrimeric complex composed of SEC61-alpha, SEC61-beta and SEC61-gamma.

The protein resides in the endoplasmic reticulum membrane. Necessary for protein translocation in the endoplasmic reticulum. This chain is Protein transport protein Sec61 gamma-2 subunit (Sec61gamma), found in Drosophila melanogaster (Fruit fly).